The following is a 213-amino-acid chain: 3-demethoxyubiquinol 3-hydroxylase (213 aa).

Residues Glu62, Glu92, His95, Glu144, Glu176, and His179 each contribute to the Fe cation site.

Belongs to the COQ7 family. Fe cation serves as cofactor.

It is found in the cell membrane. The enzyme catalyses a 5-methoxy-2-methyl-3-(all-trans-polyprenyl)benzene-1,4-diol + AH2 + O2 = a 3-demethylubiquinol + A + H2O. The protein operates within cofactor biosynthesis; ubiquinone biosynthesis. Functionally, catalyzes the hydroxylation of 2-nonaprenyl-3-methyl-6-methoxy-1,4-benzoquinol during ubiquinone biosynthesis. This Psychrobacter sp. (strain PRwf-1) protein is 3-demethoxyubiquinol 3-hydroxylase.